Here is a 388-residue protein sequence, read N- to C-terminus: MAVTPISLTPGVLAEALVDLGAIEHNVRLLCEQARGAQVMAVVKADGYGHGAVQTARAALAAGAAELGVATVDEALALRAAGISAPVLAWLHPPGIDFRPALLAGVQIGLSSQRQLDELLTAVRDTGRTATVTVKVDTGLNRNGVPPAQYPSMLTALRRAVAEQAIVPRGLMSHMVYADQPANPVNDVQAQRFTDMLAQAREQGVRFEVAHLSNSSATMSRPDLAFDMVRPGIAVYGLSPVPELGDMGLVPAMTVKCTVALVKSIRAGESVSYGHTWTAQRDTNLALLPVGYADGIFRSLGGRLQVSINGRRRPGVGRICMDQFVVDLGPGRPDVAEGDEAILFGPGSNGEPTAQDWADLLGTIHYEVVTSPRGRITRTYREAHTVES.

The active-site Proton acceptor; specific for D-alanine is the Lys44. Lys44 bears the N6-(pyridoxal phosphate)lysine mark. Arg142 provides a ligand contact to substrate. Residue Tyr273 is the Proton acceptor; specific for L-alanine of the active site. Met321 provides a ligand contact to substrate.

It belongs to the alanine racemase family. Pyridoxal 5'-phosphate is required as a cofactor.

The catalysed reaction is L-alanine = D-alanine. It participates in amino-acid biosynthesis; D-alanine biosynthesis; D-alanine from L-alanine: step 1/1. Catalyzes the interconversion of L-alanine and D-alanine. May also act on other amino acids. The chain is Alanine racemase (alr) from Mycobacterium avium (strain 104).